The following is a 462-amino-acid chain: Putative ABC transporter A445L (462 aa).

It belongs to the protein kinase superfamily. ADCK protein kinase family.

The polypeptide is Putative ABC transporter A445L (Chlorella (PBCV-1)).